Reading from the N-terminus, the 367-residue chain is Ribosome-binding ATPase YchF (367 aa).

One can recognise an OBG-type G domain in the interval 2–258 (LSAGIVGLPN…LKLEQRQYFL (257 aa)). Position 11–16 (11–16 (NVGKST)) interacts with ATP. 2 residues coordinate Mg(2+): Ser15 and Thr35. The 84-residue stretch at 281–364 (NLWSFFTFGK…KDGDVCNFKF (84 aa)) folds into the TGS domain.

It belongs to the TRAFAC class OBG-HflX-like GTPase superfamily. OBG GTPase family. YchF/OLA1 subfamily. Requires Mg(2+) as cofactor.

ATPase that binds to both the 70S ribosome and the 50S ribosomal subunit in a nucleotide-independent manner. This is Ribosome-binding ATPase YchF from Mycoplasma genitalium (strain ATCC 33530 / DSM 19775 / NCTC 10195 / G37) (Mycoplasmoides genitalium).